The primary structure comprises 513 residues: ATP synthase subunit alpha (513 aa).

169-176 serves as a coordination point for ATP; that stretch reads GDRQCGKT.

This sequence belongs to the ATPase alpha/beta chains family. In terms of assembly, F-type ATPases have 2 components, CF(1) - the catalytic core - and CF(0) - the membrane proton channel. CF(1) has five subunits: alpha(3), beta(3), gamma(1), delta(1), epsilon(1). CF(0) has three main subunits: a(1), b(2) and c(9-12). The alpha and beta chains form an alternating ring which encloses part of the gamma chain. CF(1) is attached to CF(0) by a central stalk formed by the gamma and epsilon chains, while a peripheral stalk is formed by the delta and b chains.

The protein localises to the cell inner membrane. It catalyses the reaction ATP + H2O + 4 H(+)(in) = ADP + phosphate + 5 H(+)(out). Produces ATP from ADP in the presence of a proton gradient across the membrane. The alpha chain is a regulatory subunit. The chain is ATP synthase subunit alpha from Burkholderia ambifaria (strain MC40-6).